Here is a 515-residue protein sequence, read N- to C-terminus: 2,3-bisphosphoglycerate-independent phosphoglycerate mutase (515 aa).

Residues Asp-14 and Ser-64 each coordinate Mn(2+). The Phosphoserine intermediate role is filled by Ser-64. Residues His-125, Arg-155–Asp-156, Arg-187, Arg-193, Arg-263–Arg-266, and Lys-337 each bind substrate. 5 residues coordinate Mn(2+): Asp-404, His-408, Asp-445, His-446, and His-464.

Belongs to the BPG-independent phosphoglycerate mutase family. In terms of assembly, monomer. The cofactor is Mn(2+).

It catalyses the reaction (2R)-2-phosphoglycerate = (2R)-3-phosphoglycerate. Its pathway is carbohydrate degradation; glycolysis; pyruvate from D-glyceraldehyde 3-phosphate: step 3/5. In terms of biological role, catalyzes the interconversion of 2-phosphoglycerate and 3-phosphoglycerate. This Pseudomonas aeruginosa (strain ATCC 15692 / DSM 22644 / CIP 104116 / JCM 14847 / LMG 12228 / 1C / PRS 101 / PAO1) protein is 2,3-bisphosphoglycerate-independent phosphoglycerate mutase.